A 230-amino-acid chain; its full sequence is Cytochrome c oxidase subunit 2 (230 aa).

Over 1–14 the chain is Mitochondrial intermembrane; sequence MAYPLQLGFQDATS. A helical transmembrane segment spans residues 15 to 45; that stretch reads PIMEELLHFHDHTLMIVFLISSLVLYIISTM. At 46-59 the chain is on the mitochondrial matrix side; it reads LTTKLTHTNTMDAQ. Residues 60–87 traverse the membrane as a helical segment; it reads EVETIWTILPAIILILIALPSLRILYMM. Over 88-230 the chain is Mitochondrial intermembrane; it reads DEINNPNLTI…NWTSSMMSTS (143 aa). The Cu cation site is built by H161, C196, E198, C200, H204, and M207. E198 contacts Mg(2+). Y218 carries the phosphotyrosine modification.

This sequence belongs to the cytochrome c oxidase subunit 2 family. In terms of assembly, component of the cytochrome c oxidase (complex IV, CIV), a multisubunit enzyme composed of 14 subunits. The complex is composed of a catalytic core of 3 subunits MT-CO1, MT-CO2 and MT-CO3, encoded in the mitochondrial DNA, and 11 supernumerary subunits COX4I, COX5A, COX5B, COX6A, COX6B, COX6C, COX7A, COX7B, COX7C, COX8 and NDUFA4, which are encoded in the nuclear genome. The complex exists as a monomer or a dimer and forms supercomplexes (SCs) in the inner mitochondrial membrane with NADH-ubiquinone oxidoreductase (complex I, CI) and ubiquinol-cytochrome c oxidoreductase (cytochrome b-c1 complex, complex III, CIII), resulting in different assemblies (supercomplex SCI(1)III(2)IV(1) and megacomplex MCI(2)III(2)IV(2)). Found in a complex with TMEM177, COA6, COX18, COX20, SCO1 and SCO2. Interacts with TMEM177 in a COX20-dependent manner. Interacts with COX20. Interacts with COX16. Cu cation serves as cofactor.

It is found in the mitochondrion inner membrane. It catalyses the reaction 4 Fe(II)-[cytochrome c] + O2 + 8 H(+)(in) = 4 Fe(III)-[cytochrome c] + 2 H2O + 4 H(+)(out). Functionally, component of the cytochrome c oxidase, the last enzyme in the mitochondrial electron transport chain which drives oxidative phosphorylation. The respiratory chain contains 3 multisubunit complexes succinate dehydrogenase (complex II, CII), ubiquinol-cytochrome c oxidoreductase (cytochrome b-c1 complex, complex III, CIII) and cytochrome c oxidase (complex IV, CIV), that cooperate to transfer electrons derived from NADH and succinate to molecular oxygen, creating an electrochemical gradient over the inner membrane that drives transmembrane transport and the ATP synthase. Cytochrome c oxidase is the component of the respiratory chain that catalyzes the reduction of oxygen to water. Electrons originating from reduced cytochrome c in the intermembrane space (IMS) are transferred via the dinuclear copper A center (CU(A)) of subunit 2 and heme A of subunit 1 to the active site in subunit 1, a binuclear center (BNC) formed by heme A3 and copper B (CU(B)). The BNC reduces molecular oxygen to 2 water molecules using 4 electrons from cytochrome c in the IMS and 4 protons from the mitochondrial matrix. This is Cytochrome c oxidase subunit 2 (MT-CO2) from Ornithorhynchus anatinus (Duckbill platypus).